The chain runs to 451 residues: Protein tweety homolog 1-B (451 aa).

Residues 1 to 43 (MSTSHGYRASWWTYILHQVPHTNFQFEVVDNQFAPQEWSYQQA) lie on the Extracellular side of the membrane. A helical membrane pass occupies residues 44-64 (LLFLASIAGLCLAISLVLICV). The Cytoplasmic portion of the chain corresponds to 65–86 (YLIKFCCCASQEDDDSKSHRVC). Residues 87 to 107 (CVTWSCVAAVIICCAGIGIGF) form a helical membrane-spanning segment. Residues 108-214 (YGNSETNDGV…QVNFIEDYRW (107 aa)) are Extracellular-facing. The N-linked (GlcNAc...) asparagine glycan is linked to Asn-128. Residues 215-235 (LAYILLLLLDLIICLFTLLSL) traverse the membrane as a helical segment. The Cytoplasmic portion of the chain corresponds to 236-240 (AKQIK). A helical transmembrane segment spans residues 241-261 (WLVIVMTVVSFFVLLLSWGSM). At 262–390 (GLEMATAVGL…LKGLCYDGME (129 aa)) the chain is on the extracellular side. 2 cysteine pairs are disulfide-bonded: Cys-275–Cys-385 and Cys-303–Cys-370. N-linked (GlcNAc...) asparagine glycans are attached at residues Asn-284 and Asn-355. A helical transmembrane segment spans residues 391–411 (GILFLLLFSFLSALSFTAAVC). At 412–451 (SLPRAWKRFRNRDLDYDDMDEDDPFNPQESKRFVQWQSSI) the chain is on the cytoplasmic side.

It belongs to the tweety family. As to quaternary structure, homotetramer; disulfide-linked. Homodimer.

The protein localises to the cell membrane. The catalysed reaction is chloride(in) = chloride(out). It catalyses the reaction L-glutamate(out) = L-glutamate(in). May act as a calcium-independent, swelling-dependent volume-regulated anion channel (VRAC-swell) which plays a pivotal role in the process of regulatory volume decrease (RVD) in the brain through the efflux of anions like chloride and organic osmolytes like glutamate. The protein is Protein tweety homolog 1-B (ttyh1-b) of Xenopus laevis (African clawed frog).